The following is a 447-amino-acid chain: Glutamate--tRNA ligase 1 (447 aa).

Residues 10 to 20 (PSPTGMLHVGN) carry the 'HIGH' region motif. Positions 240-244 (KISKR) match the 'KMSKS' region motif. Lys243 lines the ATP pocket.

The protein belongs to the class-I aminoacyl-tRNA synthetase family. Glutamate--tRNA ligase type 1 subfamily. As to quaternary structure, monomer.

Its subcellular location is the cytoplasm. The catalysed reaction is tRNA(Glu) + L-glutamate + ATP = L-glutamyl-tRNA(Glu) + AMP + diphosphate. Its function is as follows. Catalyzes the attachment of glutamate to tRNA(Glu) in a two-step reaction: glutamate is first activated by ATP to form Glu-AMP and then transferred to the acceptor end of tRNA(Glu). The protein is Glutamate--tRNA ligase 1 of Rickettsia prowazekii (strain Madrid E).